We begin with the raw amino-acid sequence, 177 residues long: Ribulose bisphosphate carboxylase small subunit, chloroplastic 2 (177 aa).

The transit peptide at 1-56 (MASSMMASTAAVARAGPAQSNMVAPFNGLRSSVAFPATRKANKNLSTLPSNGGKVS) directs the protein to the chloroplast.

Belongs to the RuBisCO small chain family. In terms of assembly, heterohexadecamer of 8 large and 8 small subunits.

Its subcellular location is the plastid. It is found in the chloroplast. Functionally, ruBisCO catalyzes two reactions: the carboxylation of D-ribulose 1,5-bisphosphate, the primary event in carbon dioxide fixation, as well as the oxidative fragmentation of the pentose substrate. Both reactions occur simultaneously and in competition at the same active site. Although the small subunit is not catalytic it is essential for maximal activity. The sequence is that of Ribulose bisphosphate carboxylase small subunit, chloroplastic 2 from Lemna gibba (Swollen duckweed).